We begin with the raw amino-acid sequence, 145 residues long: D-aminoacyl-tRNA deacylase (145 aa).

A Gly-cisPro motif, important for rejection of L-amino acids motif is present at residues 137 to 138 (GP).

The protein belongs to the DTD family. As to quaternary structure, homodimer.

It is found in the cytoplasm. The enzyme catalyses glycyl-tRNA(Ala) + H2O = tRNA(Ala) + glycine + H(+). The catalysed reaction is a D-aminoacyl-tRNA + H2O = a tRNA + a D-alpha-amino acid + H(+). In terms of biological role, an aminoacyl-tRNA editing enzyme that deacylates mischarged D-aminoacyl-tRNAs. Also deacylates mischarged glycyl-tRNA(Ala), protecting cells against glycine mischarging by AlaRS. Acts via tRNA-based rather than protein-based catalysis; rejects L-amino acids rather than detecting D-amino acids in the active site. By recycling D-aminoacyl-tRNA to D-amino acids and free tRNA molecules, this enzyme counteracts the toxicity associated with the formation of D-aminoacyl-tRNA entities in vivo and helps enforce protein L-homochirality. In Cereibacter sphaeroides (strain KD131 / KCTC 12085) (Rhodobacter sphaeroides), this protein is D-aminoacyl-tRNA deacylase.